Here is a 197-residue protein sequence, read N- to C-terminus: Phospholipid hydroperoxide glutathione peroxidase (197 aa).

Serine 40 is subject to Phosphoserine. Residue selenocysteine 73 is part of the active site. Position 73 (selenocysteine 73) is a non-standard amino acid, selenocysteine.

Belongs to the glutathione peroxidase family. As to quaternary structure, monomer. Has a tendency to form higher mass oligomers. Interacts with FUNDC1; this interaction promotes GPX4 recruitment into mitochondria through TOM/TIM complex where it is degraded by mitophagy. In terms of tissue distribution, expressed very intensively in the testis and weakly in lung, heart, and cerebellum.

It localises to the mitochondrion. The protein resides in the cytoplasm. It carries out the reaction a hydroperoxy polyunsaturated fatty acid + 2 glutathione = a hydroxy polyunsaturated fatty acid + glutathione disulfide + H2O. It catalyses the reaction 2 glutathione + H2O2 = glutathione disulfide + 2 H2O. The enzyme catalyses tert-butyl hydroperoxide + 2 glutathione = tert-butanol + glutathione disulfide + H2O. The catalysed reaction is cumene hydroperoxide + 2 glutathione = 2-phenylpropan-2-ol + glutathione disulfide + H2O. It carries out the reaction (9S)-hydroperoxy-(10E,12Z)-octadecadienoate + 2 glutathione = (9S)-hydroxy-(10E,12Z)-octadecadienoate + glutathione disulfide + H2O. It catalyses the reaction (13S)-hydroperoxy-(9Z,11E)-octadecadienoate + 2 glutathione = (13S)-hydroxy-(9Z,11E)-octadecadienoate + glutathione disulfide + H2O. The enzyme catalyses (5S)-hydroperoxy-(6E,8Z,11Z,14Z)-eicosatetraenoate + 2 glutathione = (5S)-hydroxy-(6E,8Z,11Z,14Z)-eicosatetraenoate + glutathione disulfide + H2O. The catalysed reaction is (12R)-hydroperoxy-(5Z,8Z,10E,14Z)-eicosatetraenoate + 2 glutathione = (12R)-hydroxy-(5Z,8Z,10E,14Z)-eicosatetraenoate + glutathione disulfide + H2O. It carries out the reaction (12S)-hydroperoxy-(5Z,8Z,10E,14Z)-eicosatetraenoate + 2 glutathione = (12S)-hydroxy-(5Z,8Z,10E,14Z)-eicosatetraenoate + glutathione disulfide + H2O. It catalyses the reaction (15S)-hydroperoxy-(5Z,8Z,11Z,13E)-eicosatetraenoate + 2 glutathione = (15S)-hydroxy-(5Z,8Z,11Z,13E)-eicosatetraenoate + glutathione disulfide + H2O. The enzyme catalyses (5S)-hydroperoxy-(6E,8Z,11Z,14Z,17Z)-eicosapentaenoate + 2 glutathione = (5S)-hydroxy-(6E,8Z,11Z,14Z,17Z)-eicosapentaenoate + glutathione disulfide + H2O. The catalysed reaction is (12S)-hydroperoxy-(5Z,8Z,10E,14Z,17Z)-eicosapentaenoate + 2 glutathione = (12S)-hydroxy-(5Z,8Z,10E,14Z,17Z)-eicosapentaenoate + glutathione disulfide + H2O. It carries out the reaction (15S)-hydroperoxy-(5Z,8Z,11Z,13E,17Z)-eicosapentaenoate + 2 glutathione = (15S)-hydroxy-(5Z,8Z,11Z,13E,17Z)-eicosapentaenoate + glutathione disulfide + H2O. It catalyses the reaction (15S)-hydroperoxy-(11Z,13E)-eicosadienoate + 2 glutathione = (15S)-hydroxy-(11Z,13E)-eicosadienoate + glutathione disulfide + H2O. The enzyme catalyses (17S)-hydroperoxy-(4Z,7Z,10Z,13Z,15E,19Z)-docosahexaenoate + 2 glutathione = (17S)-hydroxy-(4Z,7Z,10Z,13Z,15E,19Z)-docosahexaenoate + glutathione disulfide + H2O. The catalysed reaction is a hydroperoxy-1,2-diacyl-glycero-3-phosphocholine + 2 glutathione = a hydroxy-1,2-diacyl-glycero-3-phosphocholine + glutathione disulfide + H2O. In terms of biological role, essential antioxidant peroxidase that directly reduces phospholipid hydroperoxide even if they are incorporated in membranes and lipoproteins. Can also reduce fatty acid hydroperoxide, cholesterol hydroperoxide and thymine hydroperoxide. Plays a key role in protecting cells from oxidative damage by preventing membrane lipid peroxidation. Required to prevent cells from ferroptosis, a non-apoptotic cell death resulting from an iron-dependent accumulation of lipid reactive oxygen species. The presence of selenocysteine (Sec) versus Cys at the active site is essential for life: it provides resistance to overoxidation and prevents cells against ferroptosis. The presence of Sec at the active site is also essential for the survival of a specific type of parvalbumin-positive interneurons, thereby preventing against fatal epileptic seizures. May be required to protect cells from the toxicity of ingested lipid hydroperoxides. Required for normal sperm development and male fertility. Essential for maturation and survival of photoreceptor cells. Plays a role in a primary T-cell response to viral and parasitic infection by protecting T-cells from ferroptosis and by supporting T-cell expansion. Plays a role of glutathione peroxidase in platelets in the arachidonic acid metabolism. Reduces hydroperoxy ester lipids formed by a 15-lipoxygenase that may play a role as down-regulator of the cellular 15-lipoxygenase pathway. Can also reduce small soluble hydroperoxides such as H2O2, cumene hydroperoxide and tert-butyl hydroperoxide. This chain is Phospholipid hydroperoxide glutathione peroxidase, found in Macaca fuscata fuscata (Japanese macaque).